We begin with the raw amino-acid sequence, 281 residues long: Aquaporin-9 (281 aa).

Residues 1–17 (MGAFVNTKVYIENKNIR) lie on the Cytoplasmic side of the membrane. The chain crosses the membrane as a helical span at residues 18-36 (DWLSEALSMFMYMSLLLGS). Over 37–50 (AATGHFSGREDDAL) the chain is Extracellular. The helical transmembrane segment at 51–69 (FGVIFQGFSITFGIYIGGA) threads the bilayer. At 70–71 (MS) the chain is on the cytoplasmic side. The segment at residues 72–84 (GAIINPALTLAVA) is an intramembrane region (discontinuously helical). An NPA 1 motif is present at residues 76-78 (NPA). Over 85-90 (LLGKIS) the chain is Cytoplasmic. The chain crosses the membrane as a helical span at residues 91–115 (WRKCIVLQSAQYIGSFIASAVVYLI). The Extracellular segment spans residues 116–157 (YNDSLDAFGAGANFTATEPGVFRKDVAGIWSTFPKTYLKERG). 2 N-linked (GlcNAc...) asparagine glycosylation sites follow: Asn-117 and Asn-128. The helical transmembrane segment at 158–175 (AIFNQIFCSMLLTFGFLA) threads the bilayer. At 176 to 187 (ISDYKNFRPSKG) the chain is on the cytoplasmic side. Residues 188–204 (LFPIAVGLLVMTVFLAF) traverse the membrane as a helical segment. Over 205-207 (SYS) the chain is Extracellular. Positions 208–222 (TGAAMNPARDFSPRL) form an intramembrane region, discontinuously helical. The NPA 2 motif lies at 213–215 (NPA). Residues 223-241 (WSLIIGYGIEVFSYNQYEW) are Extracellular-facing. The chain crosses the membrane as a helical span at residues 242–262 (FWIPWLMPYVGAMLGALIYQL). At 263–281 (LIGAQWSKGQKGESKHKDP) the chain is on the cytoplasmic side.

The protein belongs to the MIP/aquaporin (TC 1.A.8) family.

Its subcellular location is the cell membrane. It carries out the reaction H2O(in) = H2O(out). In terms of biological role, aquaglyceroporin that may modulate the water content and osmolytes during anhydrobiosis. This chain is Aquaporin-9, found in Milnesium tardigradum (Water bear).